The primary structure comprises 861 residues: Oleate activated transcription factor 3 (861 aa).

Positions 19-47 (NCKKRKSKCDRTKPCGTCVRLGDVDSCVY) form a DNA-binding region, zn(2)-C6 fungal-type. Positions 52 to 61 (SGQPESSPSL) are enriched in polar residues. A disordered region spans residues 52-99 (SGQPESSPSLNDADPLRKQSTPAERISPGFIKKRRSSQTRQDEDHWQR).

Belongs to the OAF3 family.

It localises to the cytoplasm. The protein localises to the nucleus. The protein resides in the mitochondrion. Its function is as follows. Transcriptional inhibitor with a significantly increased number of target genes in response to oleate. This Saccharomyces cerevisiae (strain JAY291) (Baker's yeast) protein is Oleate activated transcription factor 3 (OAF3).